The chain runs to 411 residues: Multifunctional CCA protein (411 aa).

ATP is bound by residues Gly-8 and Arg-11. Residues Gly-8 and Arg-11 each coordinate CTP. 2 residues coordinate Mg(2+): Asp-21 and Asp-23. Arg-91, Arg-137, and Arg-140 together coordinate ATP. Residues Arg-91, Arg-137, and Arg-140 each contribute to the CTP site. Positions 226–327 (TGVHVMLVID…LRFLQETDAL (102 aa)) constitute an HD domain.

It belongs to the tRNA nucleotidyltransferase/poly(A) polymerase family. Bacterial CCA-adding enzyme type 1 subfamily. As to quaternary structure, monomer. Can also form homodimers and oligomers. It depends on Mg(2+) as a cofactor. The cofactor is Ni(2+).

It catalyses the reaction a tRNA precursor + 2 CTP + ATP = a tRNA with a 3' CCA end + 3 diphosphate. It carries out the reaction a tRNA with a 3' CCA end + 2 CTP + ATP = a tRNA with a 3' CCACCA end + 3 diphosphate. In terms of biological role, catalyzes the addition and repair of the essential 3'-terminal CCA sequence in tRNAs without using a nucleic acid template. Adds these three nucleotides in the order of C, C, and A to the tRNA nucleotide-73, using CTP and ATP as substrates and producing inorganic pyrophosphate. tRNA 3'-terminal CCA addition is required both for tRNA processing and repair. Also involved in tRNA surveillance by mediating tandem CCA addition to generate a CCACCA at the 3' terminus of unstable tRNAs. While stable tRNAs receive only 3'-terminal CCA, unstable tRNAs are marked with CCACCA and rapidly degraded. The chain is Multifunctional CCA protein from Methylobacillus flagellatus (strain ATCC 51484 / DSM 6875 / VKM B-1610 / KT).